Here is a 1878-residue protein sequence, read N- to C-terminus: DNA polymerase (1878 aa).

Disordered stretches follow at residues leucine 691–asparagine 727 and threonine 1839–phenylalanine 1878. Over residues alanine 694–leucine 709 the composition is skewed to acidic residues. Over residues leucine 710–lysine 723 the composition is skewed to basic and acidic residues. Residues isoleucine 1868–phenylalanine 1878 are compositionally biased toward low complexity.

The protein belongs to the DNA polymerase type-B family.

The enzyme catalyses DNA(n) + a 2'-deoxyribonucleoside 5'-triphosphate = DNA(n+1) + diphosphate. This Magallana gigas (Pacific oyster) protein is DNA polymerase.